A 307-amino-acid chain; its full sequence is Trehalose transport system permease protein SugA (307 aa).

6 consecutive transmembrane segments (helical) span residues 25–45 (LAFM…AYPI), 89–109 (LAIT…LALV), 123–143 (AVLI…YYAW), 168–188 (LGIV…LLLL), 217–237 (ILPM…LDAF), and 272–292 (LGSA…FIFI). The ABC transmembrane type-1 domain occupies 85 to 291 (LAVTLAITAV…GCVAVIAFIF (207 aa)).

The protein belongs to the binding-protein-dependent transport system permease family. In terms of assembly, the complex is composed of two ATP-binding proteins (SugC), two transmembrane proteins (Suga and SugB) and a solute-binding protein (LpqY).

The protein localises to the cell inner membrane. Part of the ABC transporter complex LpqY-SugA-SugB-SugC, which is highly specific for uptake of trehalose. Involved in the recycling of extracellular trehalose released from trehalose-containing molecules synthesized by M.tuberculosis. Trehalose uptake is essential for virulence. Probably responsible for the translocation of the substrate across the membrane. This Mycobacterium tuberculosis (strain CDC 1551 / Oshkosh) protein is Trehalose transport system permease protein SugA (sugA).